We begin with the raw amino-acid sequence, 142 residues long: Large ribosomal subunit protein uL13 (142 aa).

It belongs to the universal ribosomal protein uL13 family. In terms of assembly, part of the 50S ribosomal subunit.

This protein is one of the early assembly proteins of the 50S ribosomal subunit, although it is not seen to bind rRNA by itself. It is important during the early stages of 50S assembly. In Xanthomonas campestris pv. campestris (strain ATCC 33913 / DSM 3586 / NCPPB 528 / LMG 568 / P 25), this protein is Large ribosomal subunit protein uL13.